Reading from the N-terminus, the 572-residue chain is Squalene synthase (572 aa).

A run of 2 helical transmembrane segments spans residues 316–336 and 492–512; these read SVFNFCAIPQVMAIATLELMF and FFLIILVGMVTFMGIVALITW.

The protein belongs to the phytoene/squalene synthase family. In terms of assembly, monomer. It depends on Mg(2+) as a cofactor.

It is found in the endoplasmic reticulum membrane. The enzyme catalyses 2 (2E,6E)-farnesyl diphosphate + NADPH + H(+) = squalene + 2 diphosphate + NADP(+). It carries out the reaction 2 (2E,6E)-farnesyl diphosphate + NADH + H(+) = squalene + 2 diphosphate + NAD(+). Its pathway is terpene metabolism; lanosterol biosynthesis; lanosterol from farnesyl diphosphate: step 1/3. Its function is as follows. Catalyzes the condensation of 2 two farnesyl pyrophosphate moieties to form squalene. It is the first committed enzyme of the sterol biosynthesis pathway. Required for the biosynthesis of ergosterol. This chain is Squalene synthase (ERG9), found in Mycosarcoma maydis (Corn smut fungus).